The sequence spans 326 residues: MSHQLTFADSEFSSKRRQTRKEIFLSRMEQILPWQNMVEVIEPFYPKAGNGRRPYPLETMLRIHCMQHWYNLSDGAMEDALYEIASMRLFARLSLDSALPDRTTIMNFRHLLEQHQLARQLFKTINRWLAEAGVMMTQGTLVDATIIEAPSSTKNKEQQRDPEMHQTKKGNQWHFGMKAHIGVDAKSGLTHSLVTTAANEHDLNQLGNLLHGEEQFVSADAGYQGAPQREELAEVDVDWLIAERPGKVRTLKQHPRKNKTAINIEYMKASIRAKVEHPFRIIKRQFGFVKARYKGLLKNDNQLAMLFTLANLFRADQMIRQWERSH.

It belongs to the transposase 11 family.

Functionally, involved in the transposition of the insertion sequence IS5. The protein is Transposase InsH for insertion sequence element IS5H (insH6) of Escherichia coli (strain K12).